We begin with the raw amino-acid sequence, 30 residues long: 2-enoate reductase (30 aa).

Dodecamer; tetramer of trimers. Requires iron-sulfur cluster as cofactor. It depends on FAD as a cofactor. FMN serves as cofactor.

The catalysed reaction is butanoate + NAD(+) = (2E)-2-butenoate + NADH + H(+). In terms of biological role, involved in fermentation of amino acids (Stickland reaction) such as leucine, isoleucine, valine and phenylalanine. This is 2-enoate reductase from Clostridium tyrobutyricum.